Here is a 101-residue protein sequence, read N- to C-terminus: Small ribosomal subunit protein uS14 (101 aa).

Belongs to the universal ribosomal protein uS14 family. Part of the 30S ribosomal subunit. Contacts proteins S3 and S10.

Binds 16S rRNA, required for the assembly of 30S particles and may also be responsible for determining the conformation of the 16S rRNA at the A site. This is Small ribosomal subunit protein uS14 from Shewanella amazonensis (strain ATCC BAA-1098 / SB2B).